We begin with the raw amino-acid sequence, 253 residues long: MKDCCGGYESEELLMDFSGKDKAAYVQDTFNSIAKRYDVMNTLMSFGLDKGWRKKAVQTVEAKPGMTMVDICCGTAQLSLELAMTVGEQGQITGLDFSENMLKKAQENLAGSPYRSIIELRQGDAMNLPFADNSFDGATVGWGLRNLPDLEKGVQEMIRVVKPGGMVVSLDMAKPTMPGFKQGYWLYFNKLVPLMGKIWAGKAKAYQYLHDSAVEFPSQQELANIFARCGLTETRYQNLAGGVVAIVSGRKPR.

S-adenosyl-L-methionine is bound by residues Thr-75, Asp-96, and 124 to 125 (DA).

The protein belongs to the class I-like SAM-binding methyltransferase superfamily. MenG/UbiE family.

The enzyme catalyses a 2-demethylmenaquinol + S-adenosyl-L-methionine = a menaquinol + S-adenosyl-L-homocysteine + H(+). The protein operates within quinol/quinone metabolism; menaquinone biosynthesis; menaquinol from 1,4-dihydroxy-2-naphthoate: step 2/2. Methyltransferase required for the conversion of demethylmenaquinol (DMKH2) to menaquinol (MKH2). In Desulfitobacterium hafniense (strain Y51), this protein is Demethylmenaquinone methyltransferase.